The sequence spans 97 residues: YcgL domain-containing protein PSPTO_3921 (97 aa).

In terms of domain architecture, YcgL spans 3 to 87 (RICSIYRSPK…AEDEYIEHLP (85 aa)).

This is YcgL domain-containing protein PSPTO_3921 from Pseudomonas syringae pv. tomato (strain ATCC BAA-871 / DC3000).